The primary structure comprises 162 residues: Transcription elongation factor GreA (162 aa).

The stretch at 45–75 forms a coiled coil; it reads ENAEYEAAREKQAFIEGRIKELEDMAARAEI.

It belongs to the GreA/GreB family.

Functionally, necessary for efficient RNA polymerase transcription elongation past template-encoded arresting sites. The arresting sites in DNA have the property of trapping a certain fraction of elongating RNA polymerases that pass through, resulting in locked ternary complexes. Cleavage of the nascent transcript by cleavage factors such as GreA or GreB allows the resumption of elongation from the new 3'terminus. GreA releases sequences of 2 to 3 nucleotides. This is Transcription elongation factor GreA from Rickettsia canadensis (strain McKiel).